The following is a 130-amino-acid chain: ATP synthase epsilon chain (130 aa).

It belongs to the ATPase epsilon chain family. As to quaternary structure, F-type ATPases have 2 components, CF(1) - the catalytic core - and CF(0) - the membrane proton channel. CF(1) has five subunits: alpha(3), beta(3), gamma(1), delta(1), epsilon(1). CF(0) has three main subunits: a, b and c.

The protein resides in the cell inner membrane. Its function is as follows. Produces ATP from ADP in the presence of a proton gradient across the membrane. The sequence is that of ATP synthase epsilon chain from Campylobacter hominis (strain ATCC BAA-381 / DSM 21671 / CCUG 45161 / LMG 19568 / NCTC 13146 / CH001A).